The primary structure comprises 869 residues: H(+)/Cl(-) exchange transporter 6 (869 aa).

Residues 1–80 are Cytoplasmic-facing; it reads MAGCRGSLCC…KKGRRYEAVK (80 aa). Transmembrane regions (helical) follow at residues 81-113 and 128-150; these read WMVV…FGVV and LSLL…LVLI. Residues 156 to 160 carry the Selectivity filter part_1 motif; it reads GSGIP. Residue Ser157 participates in chloride binding. Residues 159–166 constitute an intramembrane region (helical); sequence IPEVKCYL. Helical transmembrane passes span 176 to 194 and 200 to 217; these read RLRT…VAGG and EGPM…LPQF. Residues 198–202 carry the Selectivity filter part_2 motif; it reads EKEGP. 2 intramembrane regions (helical) span residues 241-253 and 257-265; these read FVSA…VAAA and PIGGTLFSL. 3 helical membrane-spanning segments follow: residues 277-294, 335-364, and 371-392; these read TWKV…LNFF, GFFV…YRMR, and KLVR…VFVA. Asn410, Asn422, and Asn432 each carry an N-linked (GlcNAc...) asparagine glycan. The next 2 helical transmembrane spans lie at 462–481 and 487–511; these read PVTL…WTYG and GLFV…KSYI. The short motif at 487 to 491 is the Selectivity filter part_3 element; that stretch reads GLFVP. Chloride is bound at residue Phe489. The helical intramembrane region spans 519–533; that stretch reads GTFALIGAAAFLGGV. An intramembrane region (note=Loop between two helices) is located at residues 534 to 536; that stretch reads VRM. An intramembrane region (helical) is located at residues 537–548; that stretch reads TISLTVILIEST. An intramembrane region (note=Loop between two helices) is located at residues 549 to 552; that stretch reads NEIT. The helical transmembrane segment at 553–571 threads the bilayer; the sequence is YGLPIMVTLMVAKWTGDFF. Over 572–869 the chain is Cytoplasmic; that stretch reads NKGIYDIHVG…ARLRQHYQTI (298 aa). Tyr576 is a binding site for chloride. The CBS 1 domain occupies 605-662; that stretch reads MEPNLTYVYPHTRIQSLVSILRTTVHHAFPVVTENRGNEKEFMKGNQLISNNIKFKKS. ATP is bound at residue 630 to 632; that stretch reads HHA. Ser773 is subject to Phosphoserine. The region spanning 807–868 is the CBS 2 domain; sequence MNPSPFTVSP…QARLRQHYQT (62 aa). Residue 849–852 coordinates ATP; it reads TRHN.

Belongs to the chloride channel (TC 2.A.49) family. ClC-6/CLCN6 subfamily. Post-translationally, N-glycosylated on several asparagine residues. As to expression, testis, ovary, small intestine, brain and skeletal muscle. Low level expression in aortic and coronary vascular smooth muscle cells, and aortic endothelial cells. Isoform 3 is only detected in kidney.

The protein resides in the late endosome membrane. The catalysed reaction is 2 chloride(in) + H(+)(out) = 2 chloride(out) + H(+)(in). Voltage-gated channel mediating the exchange of chloride ions against protons. Functions as antiporter and contributes to the acidification of the late endosome lumen. The CLC channel family contains both chloride channels and proton-coupled anion transporters that exchange chloride or another anion for protons. The presence of conserved gating glutamate residues is typical for family members that function as antiporters. This is H(+)/Cl(-) exchange transporter 6 from Homo sapiens (Human).